Consider the following 1201-residue polypeptide: Potassium/sodium hyperpolarization-activated cyclic nucleotide-gated channel 4 (1201 aa).

Residues 1–263 (MDKLPPSMRK…IIHPYSDFRF (263 aa)) lie on the Cytoplasmic side of the membrane. Positions 24 to 183 (WIMDEEEDGE…PASASCEQPS (160 aa)) are disordered. Positions 26 to 36 (MDEEEDGEEEG) are enriched in acidic residues. Residues 105–118 (SRGGGSGGAGGGSS) show a composition bias toward gly residues. A compositionally biased stretch (basic and acidic residues) spans 121-132 (HLHDSAEERRLI). Phosphoserine is present on Ser139. The segment covering 164–174 (ASPPPQQPPQP) has biased composition (pro residues). The involved in subunit assembly stretch occupies residues 209–260 (GQSGFMQRQFGAMLQPGVNKFSLRMFGSQKAVEREQERVKSAGFWIIHPYSD). The helical transmembrane segment at 264–286 (YWDLTMLLLMVGNLIIIPVGITF) threads the bilayer. At 287 to 293 (FKDENTT) the chain is on the extracellular side. The helical transmembrane segment at 294-314 (PWIVFNVVSDTFFLIDLVLNF) threads the bilayer. Residues 315 to 336 (RTGIVVEDNTEIILDPQRIKMK) are Cytoplasmic-facing. A helical transmembrane segment spans residues 337–359 (YLKSWFVVDFISSIPVDYIFLIV). The Extracellular portion of the chain corresponds to 360–378 (ETRIDSEVYKTARALRIVR). A helical; Voltage-sensor membrane pass occupies residues 379-399 (FTKILSLLRLLRLSRLIRYIH). Residues 400–413 (QWEEIFHMTYDLAS) are Cytoplasmic-facing. The helical transmembrane segment at 414–436 (AVVRIVNLIGMMLLLCHWDGCLQ) threads the bilayer. Topologically, residues 437-464 (FLVPMLQDFPHDCWVSINGMVNNSWGKQ) are extracellular. N-linked (GlcNAc...) asparagine glycosylation is present at Asn458. The pore-forming intramembrane region spans 465–486 (YSYALFKAMSHMLCIGYGRQAP). The Extracellular segment spans residues 487–491 (VGMSD). The chain crosses the membrane as a helical span at residues 492–517 (VWLTMLSMIVGATCYAMFIGHATALI). Residues 518 to 1201 (QSLDSSRRQY…PVRSKLPSNL (684 aa)) lie on the Cytoplasmic side of the membrane. Tyr559, Lys562, Phe564, and Glu566 together coordinate 3',5'-cyclic GMP. 3',5'-cyclic AMP contacts are provided by Gly659, Glu660, Cys662, Arg669, Thr670, Val673, and Arg710. 2 disordered regions span residues 804–902 (AIFR…TAAA) and 914–1201 (ALGG…PSNL). Low complexity-rich tracts occupy residues 831 to 856 (SLIP…SSSS) and 866 to 880 (SAPP…SSSS). The segment covering 881-894 (SPPPGACGSPPAPT) has biased composition (pro residues). Low complexity-rich tracts occupy residues 915–939 (LGGS…SPQA) and 967–995 (RSPS…SSTP). The segment covering 1029 to 1042 (GHSPGPPRTFPSAP) has biased composition (pro residues). Positions 1045 to 1056 (ASGSHGSLLLPP) are enriched in low complexity. Phosphoserine occurs at positions 1105 and 1108. The segment covering 1122-1134 (AGGGSGSSGGLGP) has biased composition (gly residues).

Belongs to the potassium channel HCN family. As to quaternary structure, homotetramer. The potassium channel is composed of a homo- or heterotetrameric complex of pore-forming subunits. Interacts with PEX5L with a 4:4 HCN4:PEX5L stoichiometry; reduces the effects of cAMP on the voltage-dependence and rate of activation. Interacts with IRAG1; regulates HCN4 channel activity. Interacts with IRAG2; regulates HCN4 channel activity. S-palmitoylated. As to expression, detected in a subset of elongated cells in taste buds.

It is found in the cell membrane. The enzyme catalyses K(+)(in) = K(+)(out). It carries out the reaction Na(+)(in) = Na(+)(out). Its activity is regulated as follows. Activated by cAMP, and to a lesser extent by cGMP and cCMP. cAMP binding causes a conformation change that leads to the assembly of an active tetramer and channel opening. Binding of cAMP removes a tonic inhibition conferred by cyclic nucleotide-binding domain (CNBD) on channel opening. Cyclic dinucleotides can modulate HCN4 channel; cyclic dinucleotides acting as potent antagonists of cAMP. Inhibited by extracellular Cs(+) ions. Auxiliary subunits can also regulate HCN4 channel. IRAG1 causes a gain-of-function by shifting HCN4 activation to more depolarized membrane potentials in the absence of cAMP. In contrast, IRAG2 causes a loss-of-function by inhibiting cAMP-dependent potentiation of HCN4 activation. Hyperpolarization-activated ion channel that are permeable to Na(+) and K(+) ions with very slow activation and inactivation. Exhibits higher selectivity for K(+) over Na(+) ions. Contributes to the native pacemaker currents in heart (If) that regulate the rhythm of heart beat. Contributes to the native pacemaker currents in neurons (Ih). May mediate responses to sour stimuli. The chain is Potassium/sodium hyperpolarization-activated cyclic nucleotide-gated channel 4 (Hcn4) from Mus musculus (Mouse).